A 156-amino-acid chain; its full sequence is Flagellar assembly factor FliW (156 aa).

This sequence belongs to the FliW family. As to quaternary structure, interacts with translational regulator CsrA and flagellin(s).

The protein resides in the cytoplasm. Acts as an anti-CsrA protein, binds CsrA and prevents it from repressing translation of its target genes, one of which is flagellin. Binds to flagellin and participates in the assembly of the flagellum. This is Flagellar assembly factor FliW from Lachnoclostridium phytofermentans (strain ATCC 700394 / DSM 18823 / ISDg) (Clostridium phytofermentans).